The sequence spans 251 residues: Triosephosphate isomerase (251 aa).

Asn9–Lys11 contributes to the substrate binding site. His94 acts as the Electrophile in catalysis. Glu166 (proton acceptor) is an active-site residue. Residues Gly172, Ser211, and Gly232 to Gly233 contribute to the substrate site.

It belongs to the triosephosphate isomerase family. As to quaternary structure, homodimer.

The protein localises to the cytoplasm. The catalysed reaction is D-glyceraldehyde 3-phosphate = dihydroxyacetone phosphate. It participates in carbohydrate biosynthesis; gluconeogenesis. Its pathway is carbohydrate degradation; glycolysis; D-glyceraldehyde 3-phosphate from glycerone phosphate: step 1/1. In terms of biological role, involved in the gluconeogenesis. Catalyzes stereospecifically the conversion of dihydroxyacetone phosphate (DHAP) to D-glyceraldehyde-3-phosphate (G3P). This Xanthomonas euvesicatoria pv. vesicatoria (strain 85-10) (Xanthomonas campestris pv. vesicatoria) protein is Triosephosphate isomerase.